Consider the following 405-residue polypeptide: Cysteine desulfurase IscS (405 aa).

Position 156 (N156) interacts with pyridoxal 5'-phosphate. Position 207 is an N6-(pyridoxal phosphate)lysine (K207). C329 acts as the Cysteine persulfide intermediate in catalysis. C329 is a [2Fe-2S] cluster binding site.

The protein belongs to the class-V pyridoxal-phosphate-dependent aminotransferase family. NifS/IscS subfamily. Homodimer. Forms a heterotetramer with IscU, interacts with other sulfur acceptors. The cofactor is pyridoxal 5'-phosphate.

It localises to the cytoplasm. The catalysed reaction is (sulfur carrier)-H + L-cysteine = (sulfur carrier)-SH + L-alanine. It functions in the pathway cofactor biosynthesis; iron-sulfur cluster biosynthesis. Master enzyme that delivers sulfur to a number of partners involved in Fe-S cluster assembly, tRNA modification or cofactor biosynthesis. Catalyzes the removal of elemental sulfur atoms from cysteine to produce alanine. Functions as a sulfur delivery protein for Fe-S cluster synthesis onto IscU, an Fe-S scaffold assembly protein, as well as other S acceptor proteins. In Dechloromonas aromatica (strain RCB), this protein is Cysteine desulfurase IscS.